The sequence spans 210 residues: ATP-dependent Clp protease proteolytic subunit (210 aa).

Ser106 (nucleophile) is an active-site residue. His131 is a catalytic residue.

It belongs to the peptidase S14 family. Fourteen ClpP subunits assemble into 2 heptameric rings which stack back to back to give a disk-like structure with a central cavity, resembling the structure of eukaryotic proteasomes.

The protein resides in the cytoplasm. The catalysed reaction is Hydrolysis of proteins to small peptides in the presence of ATP and magnesium. alpha-casein is the usual test substrate. In the absence of ATP, only oligopeptides shorter than five residues are hydrolyzed (such as succinyl-Leu-Tyr-|-NHMec, and Leu-Tyr-Leu-|-Tyr-Trp, in which cleavage of the -Tyr-|-Leu- and -Tyr-|-Trp bonds also occurs).. Cleaves peptides in various proteins in a process that requires ATP hydrolysis. Has a chymotrypsin-like activity. Plays a major role in the degradation of misfolded proteins. The protein is ATP-dependent Clp protease proteolytic subunit of Afipia carboxidovorans (strain ATCC 49405 / DSM 1227 / KCTC 32145 / OM5) (Oligotropha carboxidovorans).